The chain runs to 364 residues: Fructose-bisphosphate aldolase A (364 aa).

Tyr5 is subject to Phosphotyrosine. Thr9 bears the Phosphothreonine mark. Phosphoserine is present on residues Ser36 and Ser39. Residue Lys42 is modified to N6-acetyllysine; alternate. A Glycyl lysine isopeptide (Lys-Gly) (interchain with G-Cter in SUMO1); alternate cross-link involves residue Lys42. Lys42 participates in a covalent cross-link: Glycyl lysine isopeptide (Lys-Gly) (interchain with G-Cter in SUMO2); alternate. Arg43 serves as a coordination point for beta-D-fructose 1,6-bisphosphate. Ser46 is subject to Phosphoserine. Lys99 is subject to N6-(2-hydroxyisobutyryl)lysine. Position 108 is an N6-acetyllysine (Lys108). The residue at position 111 (Lys111) is an N6-acetyllysine; alternate. The residue at position 111 (Lys111) is an N6-malonyllysine; alternate. A Phosphoserine modification is found at Ser132. Lys147 is modified (N6-(2-hydroxyisobutyryl)lysine). Glu188 (proton acceptor) is an active-site residue. Lys230 (schiff-base intermediate with dihydroxyacetone-P) is an active-site residue. Ser272 is subject to Phosphoserine. Residues 272 to 274, Ser301, and Arg304 contribute to the beta-D-fructose 1,6-bisphosphate site; that span reads SGG. At Lys312 the chain carries N6-malonyllysine. Lys330 is subject to N6-acetyllysine.

This sequence belongs to the class I fructose-bisphosphate aldolase family. As to quaternary structure, homotetramer. Interacts with SNX9 and WAS. Interacts with FBP2; the interaction blocks FBP2 inhibition by physiological concentrations of AMP and reduces inhibition by Ca(2+).

It is found in the cytoplasm. The protein localises to the myofibril. The protein resides in the sarcomere. It localises to the i band. Its subcellular location is the m line. The enzyme catalyses beta-D-fructose 1,6-bisphosphate = D-glyceraldehyde 3-phosphate + dihydroxyacetone phosphate. The protein operates within carbohydrate degradation; glycolysis; D-glyceraldehyde 3-phosphate and glycerone phosphate from D-glucose: step 4/4. Catalyzes the reversible conversion of beta-D-fructose 1,6-bisphosphate (FBP) into two triose phosphate and plays a key role in glycolysis and gluconeogenesis. In addition, may also function as scaffolding protein. In Pongo abelii (Sumatran orangutan), this protein is Fructose-bisphosphate aldolase A (ALDOA).